A 745-amino-acid polypeptide reads, in one-letter code: Polyribonucleotide nucleotidyltransferase (745 aa).

Positions 487 and 493 each coordinate Mg(2+). In terms of domain architecture, KH spans 554–613 (PSTTTIKIDKDKIRDIIGPGGKVIKEICEISGAKIDISDDGTVSIYASDRDKLKVALDKI). The S1 motif domain occupies 623–691 (GEIFNGTVMK…NKGKAKLTIK (69 aa)). The interval 691–745 (KNADKDKSSNNTKPKTNAKDNSEPEQRRDSSKKRAWNEDNNAETAEVITERKYFN) is disordered. Basic and acidic residues predominate over residues 707-719 (NAKDNSEPEQRRD).

It belongs to the polyribonucleotide nucleotidyltransferase family. Mg(2+) serves as cofactor.

The protein localises to the cytoplasm. The catalysed reaction is RNA(n+1) + phosphate = RNA(n) + a ribonucleoside 5'-diphosphate. In terms of biological role, involved in mRNA degradation. Catalyzes the phosphorolysis of single-stranded polyribonucleotides processively in the 3'- to 5'-direction. The polypeptide is Polyribonucleotide nucleotidyltransferase (Rickettsia massiliae (strain Mtu5)).